Reading from the N-terminus, the 365-residue chain is Ribosomal RNA large subunit methyltransferase M (365 aa).

Residues Ser194, 227-230 (CPGG), Asp246, Asp266, and Asp284 contribute to the S-adenosyl-L-methionine site. Catalysis depends on Lys313, which acts as the Proton acceptor.

This sequence belongs to the class I-like SAM-binding methyltransferase superfamily. RNA methyltransferase RlmE family. RlmM subfamily. In terms of assembly, monomer.

It localises to the cytoplasm. The enzyme catalyses cytidine(2498) in 23S rRNA + S-adenosyl-L-methionine = 2'-O-methylcytidine(2498) in 23S rRNA + S-adenosyl-L-homocysteine + H(+). In terms of biological role, catalyzes the 2'-O-methylation at nucleotide C2498 in 23S rRNA. This is Ribosomal RNA large subunit methyltransferase M from Pasteurella multocida (strain Pm70).